We begin with the raw amino-acid sequence, 331 residues long: Meiotic recombination protein P22 (331 aa).

A disordered region spans residues 132-187; the sequence is NNIQKEVHQRNSQRRSIQCTPKKRGRKPKQPAKKLQSRISTDQLGSTPSPSKLPAK. Positions 152-167 are enriched in basic residues; the sequence is PKKRGRKPKQPAKKLQ. Positions 168-181 are enriched in polar residues; sequence SRISTDQLGSTPSP.

The protein belongs to the TOP6B-like family.

The protein resides in the chromosome. Functionally, required for formation of the mei-W68-mediated double-strand breaks (DSBs) that initiate meiotic recombination. This is Meiotic recombination protein P22 from Drosophila melanogaster (Fruit fly).